Here is a 345-residue protein sequence, read N- to C-terminus: Ubiquinone biosynthesis O-methyltransferase, mitochondrial (345 aa).

Residues 1–86 constitute a mitochondrion transit peptide; it reads MWRGGRLSSR…TYRSSWKKLY (86 aa). Arg124 lines the S-adenosyl-L-methionine pocket. An N6-acetyllysine mark is found at Lys143 and Lys149. S-adenosyl-L-methionine is bound by residues Gly154 and Asp175. Lys196 carries the post-translational modification N6-acetyllysine. Ser222 is an S-adenosyl-L-methionine binding site. Positions 223, 226, and 227 each coordinate Mg(2+).

It belongs to the class I-like SAM-binding methyltransferase superfamily. UbiG/COQ3 family. Component of a multi-subunit COQ enzyme complex, composed of at least COQ3, COQ4, COQ5, COQ6, COQ7 and COQ9. Mg(2+) serves as cofactor.

The protein resides in the mitochondrion inner membrane. The catalysed reaction is 3,4-dihydroxy-5-(all-trans-decaprenyl)benzoate + S-adenosyl-L-methionine = 4-hydroxy-3-methoxy-5-(all-trans-decaprenyl)benzoate + S-adenosyl-L-homocysteine + H(+). It carries out the reaction a 3-demethylubiquinone + S-adenosyl-L-methionine = a ubiquinone + S-adenosyl-L-homocysteine. The enzyme catalyses 3-demethylubiquinol-10 + S-adenosyl-L-methionine = ubiquinol-10 + S-adenosyl-L-homocysteine + H(+). It participates in cofactor biosynthesis; ubiquinone biosynthesis. In terms of biological role, O-methyltransferase required for two non-consecutive steps during ubiquinone biosynthesis. Catalyzes the 2 O-methylation of 3,4-dihydroxy-5-(all-trans-decaprenyl)benzoic acid into 4-hydroxy-3-methoxy-5-(all-trans-decaprenyl)benzoic acid. Also catalyzes the last step of ubiquinone biosynthesis by mediating methylation of 3-demethylubiquinone into ubiquinone. Also able to mediate the methylation of 3-demethylubiquinol-10 into ubiquinol-10. The polypeptide is Ubiquinone biosynthesis O-methyltransferase, mitochondrial (Rattus norvegicus (Rat)).